Consider the following 324-residue polypeptide: Pancreas transcription factor 1 subunit alpha (324 aa).

The bHLH domain occupies glutamine 160–leucine 212. A disordered region spans residues aspartate 302 to serine 324.

As to quaternary structure, component of the pancreas transcription factor 1 complex (PTF1) which is composed of TCF3/p75, TCF12/p64 and PTF1A/p48. TCF3 is responsible for the nuclear import of the p48/p64 complex. Interacts with TCF3 and RBPSUH/RBP-Jkappa. In terms of tissue distribution, expressed in precursors of pancreatic islets, acini and ducts.

It is found in the nucleus. The protein localises to the cytoplasm. Transcription factor implicated in the cell fate determination in various organs. Binds to the E-box consensus sequence 5'-CANNTG-3'. Plays a role in early and late pancreas development and differentiation. Important for determining whether cells allocated to the pancreatic buds continue towards pancreatic organogenesis or revert back to duodenal fates. May be involved in the maintenance of exocrine pancreas-specific gene expression including ELA1 and amylase. Required for the formation of pancreatic acinar and ductal cells. Plays an important role in cerebellar development. Directly regulated by FOXN4 and RORC during retinal development, FOXN4-PTF1A pathway plays a central role in directing the differentiation of retinal progenitors towards horizontal and amacrine fates. The chain is Pancreas transcription factor 1 subunit alpha (Ptf1a) from Mus musculus (Mouse).